The primary structure comprises 208 residues: Octanoyltransferase (208 aa).

In terms of domain architecture, BPL/LPL catalytic spans glycine 30–phenylalanine 208. Substrate is bound by residues arginine 69–histidine 76, serine 142–glycine 144, and glycine 155–alanine 157. Cysteine 173 (acyl-thioester intermediate) is an active-site residue.

It belongs to the LipB family.

Its subcellular location is the cytoplasm. It catalyses the reaction octanoyl-[ACP] + L-lysyl-[protein] = N(6)-octanoyl-L-lysyl-[protein] + holo-[ACP] + H(+). It functions in the pathway protein modification; protein lipoylation via endogenous pathway; protein N(6)-(lipoyl)lysine from octanoyl-[acyl-carrier-protein]: step 1/2. Its function is as follows. Catalyzes the transfer of endogenously produced octanoic acid from octanoyl-acyl-carrier-protein onto the lipoyl domains of lipoate-dependent enzymes. Lipoyl-ACP can also act as a substrate although octanoyl-ACP is likely to be the physiological substrate. In Orientia tsutsugamushi (strain Boryong) (Rickettsia tsutsugamushi), this protein is Octanoyltransferase.